The following is a 183-amino-acid chain: Ribosome-recycling factor (183 aa).

It belongs to the RRF family.

The protein resides in the cytoplasm. In terms of biological role, responsible for the release of ribosomes from messenger RNA at the termination of protein biosynthesis. May increase the efficiency of translation by recycling ribosomes from one round of translation to another. This chain is Ribosome-recycling factor, found in Mycoplasma genitalium (strain ATCC 33530 / DSM 19775 / NCTC 10195 / G37) (Mycoplasmoides genitalium).